A 147-amino-acid chain; its full sequence is Globin (147 aa).

In terms of domain architecture, Globin spans 1-147; sequence GLSAEQKTAL…LLGVLIENHQ (147 aa). Heme b is bound by residues His66 and His98.

The protein belongs to the globin family. In terms of assembly, homodimer.

The polypeptide is Globin (Tritia mutabilis (Sea snail)).